The chain runs to 96 residues: Guanyl-specific ribonuclease Sa (96 aa).

A disulfide bridge connects residues cysteine 7 and cysteine 96. Glutamate 54 serves as the catalytic Proton acceptor. Histidine 85 acts as the Proton donor in catalysis.

It belongs to the ribonuclease N1/T1 family.

It is found in the secreted. The enzyme catalyses [RNA] containing guanosine + H2O = an [RNA fragment]-3'-guanosine-3'-phosphate + a 5'-hydroxy-ribonucleotide-3'-[RNA fragment].. In Kitasatospora aureofaciens (Streptomyces aureofaciens), this protein is Guanyl-specific ribonuclease Sa (rnaSA).